Consider the following 429-residue polypeptide: SET domain-containing protein 14 (429 aa).

Positions 26, 29, 39, 42, 48, 52, 60, and 64 each coordinate Zn(2+). The segment at 26–64 adopts an MYND-type zinc-finger fold; that stretch reads CNQCLTSMAELKKCSACRRLAYCSQECQRADWKLHKVEC.

The protein localises to the nucleus. The chain is SET domain-containing protein 14 (set-14) from Caenorhabditis elegans.